Consider the following 657-residue polypeptide: Matrix metalloproteinase-15 (657 aa).

An N-terminal signal peptide occupies residues 1–36 (MGSDRSALGRPGCTGSCLSSRASLLPLLLVLLDCLG). Positions 37-127 (HGTASKDAEV…KANLRRRRKR (91 aa)) are excised as a propeptide. The Cysteine switch signature appears at 105–112 (PRCGVPDQ). Cysteine 107 contributes to the Zn(2+) binding site. Residues 128–614 (YTLTGKAWNN…MEEVVRTVNV (487 aa)) are Extracellular-facing. The N-linked (GlcNAc...) asparagine glycan is linked to asparagine 146. Histidine 255 lines the Zn(2+) pocket. Glutamate 256 is a catalytic residue. Zn(2+)-binding residues include histidine 259 and histidine 265. A disordered region spans residues 295–365 (IQQLYGSPDG…ERPDQYGPNI (71 aa)). Over residues 328–337 (PRPPQPPHPG) the composition is skewed to pro residues. Hemopexin repeat units lie at residues 363 to 411 (PNIC…WRGL), 412 to 457 (PGNI…GTDI), 459 to 507 (YDRI…QGIP), and 508 to 555 (TSPK…FMGC). Cysteines 366 and 555 form a disulfide. The N-linked (GlcNAc...) asparagine glycan is linked to asparagine 414. Residues 561–599 (PRSRWPDVARPPFNPNGGAEPEADGDSKEENAGDKDEGS) form a disordered region. A compositionally biased stretch (basic and acidic residues) spans 585-599 (GDSKEENAGDKDEGS). Residues 615-635 (VMVLVPLLLLLCILGLAFALV) traverse the membrane as a helical segment. At 636-657 (QMQRKGAPRMLLYCKRSLQEWV) the chain is on the cytoplasmic side.

This sequence belongs to the peptidase M10A family. Zn(2+) is required as a cofactor. Requires Ca(2+) as cofactor. The precursor is cleaved by a furin endopeptidase.

It localises to the membrane. Endopeptidase that degrades various components of the extracellular matrix. May activate progelatinase A. The polypeptide is Matrix metalloproteinase-15 (Mmp15) (Mus musculus (Mouse)).